We begin with the raw amino-acid sequence, 390 residues long: GTPase Obg (390 aa).

An Obg domain is found at 1 to 159 (MKFIDESLIR…RDLLLELMLL (159 aa)). Residues 160–333 (ADVGMLGLPN…LCRDIMDFII (174 aa)) form the OBG-type G domain. Residues 166–173 (GLPNAGKS), 191–195 (FTTLV), 213–216 (DIPG), 283–286 (NKID), and 314–316 (SAA) contribute to the GTP site. Residues Ser-173 and Thr-193 each coordinate Mg(2+). The disordered stretch occupies residues 363-382 (EHQFDDDEDWDDDWSEEDDE). The segment covering 366 to 382 (FDDDEDWDDDWSEEDDE) has biased composition (acidic residues).

This sequence belongs to the TRAFAC class OBG-HflX-like GTPase superfamily. OBG GTPase family. Monomer. Mg(2+) is required as a cofactor.

The protein localises to the cytoplasm. In terms of biological role, an essential GTPase which binds GTP, GDP and possibly (p)ppGpp with moderate affinity, with high nucleotide exchange rates and a fairly low GTP hydrolysis rate. Plays a role in control of the cell cycle, stress response, ribosome biogenesis and in those bacteria that undergo differentiation, in morphogenesis control. This is GTPase Obg from Haemophilus influenzae (strain ATCC 51907 / DSM 11121 / KW20 / Rd).